The following is a 146-amino-acid chain: 3-dehydroquinate dehydratase (146 aa).

The active-site Proton acceptor is Tyr23. Positions 74, 80, and 87 each coordinate substrate. His100 functions as the Proton donor in the catalytic mechanism. Residues 101-102 (IS) and Arg111 each bind substrate.

Belongs to the type-II 3-dehydroquinase family. In terms of assembly, homododecamer.

It catalyses the reaction 3-dehydroquinate = 3-dehydroshikimate + H2O. Its pathway is metabolic intermediate biosynthesis; chorismate biosynthesis; chorismate from D-erythrose 4-phosphate and phosphoenolpyruvate: step 3/7. Catalyzes a trans-dehydration via an enolate intermediate. This is 3-dehydroquinate dehydratase from Bacillus cereus (strain AH820).